A 483-amino-acid polypeptide reads, in one-letter code: UDP-N-acetylmuramoyl-L-alanyl-D-glutamate--2,6-diaminopimelate ligase (483 aa).

Residue serine 30 participates in UDP-N-acetyl-alpha-D-muramoyl-L-alanyl-D-glutamate binding. An ATP-binding site is contributed by 109 to 115 (GTNGKTT). UDP-N-acetyl-alpha-D-muramoyl-L-alanyl-D-glutamate-binding positions include 151–152 (TT), serine 178, and arginine 186. Lysine 218 bears the N6-carboxylysine mark. Meso-2,6-diaminopimelate is bound by residues arginine 380, 403–406 (DNPR), glycine 453, and glutamate 457. A Meso-diaminopimelate recognition motif motif is present at residues 403–406 (DNPR).

The protein belongs to the MurCDEF family. MurE subfamily. Mg(2+) serves as cofactor. Post-translationally, carboxylation is probably crucial for Mg(2+) binding and, consequently, for the gamma-phosphate positioning of ATP.

The protein resides in the cytoplasm. It catalyses the reaction UDP-N-acetyl-alpha-D-muramoyl-L-alanyl-D-glutamate + meso-2,6-diaminopimelate + ATP = UDP-N-acetyl-alpha-D-muramoyl-L-alanyl-gamma-D-glutamyl-meso-2,6-diaminopimelate + ADP + phosphate + H(+). It functions in the pathway cell wall biogenesis; peptidoglycan biosynthesis. Functionally, catalyzes the addition of meso-diaminopimelic acid to the nucleotide precursor UDP-N-acetylmuramoyl-L-alanyl-D-glutamate (UMAG) in the biosynthesis of bacterial cell-wall peptidoglycan. This chain is UDP-N-acetylmuramoyl-L-alanyl-D-glutamate--2,6-diaminopimelate ligase, found in Chlamydia caviae (strain ATCC VR-813 / DSM 19441 / 03DC25 / GPIC) (Chlamydophila caviae).